Consider the following 481-residue polypeptide: Pre-mRNA-splicing factor sap114 (481 aa).

The span at 1–15 (MSSLMEFQDRNTTNN) shows a compositional bias: polar residues. Residues 1 to 34 (MSSLMEFQDRNTTNNETEHQKSITDQSSSVPAGV) are disordered. SURP motif repeat units follow at residues 44–86 (IIDK…HPYY) and 147–189 (VLRL…YPYF). 2 disordered regions span residues 335–373 (PSLA…QKPV) and 452–481 (GVEI…NKRR). 2 stretches are compositionally biased toward polar residues: residues 345–368 (ISST…TQPK) and 467–481 (ATQS…NKRR).

As to quaternary structure, belongs to the 40S cdc5-associated complex (or cwf complex), a spliceosome sub-complex reminiscent of a late-stage spliceosome composed of the U2, U5 and U6 snRNAs and at least brr2, cdc5, cwf2/prp3, cwf3/syf1, cwf4/syf3, cwf5/ecm2, spp42/cwf6, cwf7/spf27, cwf8, cwf9, cwf10, cwf11, cwf12, prp45/cwf13, cwf14, cwf15, cwf16, cwf17, cwf18, cwf19, cwf20, cwf21, cwf22, cwf23, cwf24, cwf25, cwf26, cyp7/cwf27, cwf28, cwf29/ist3, lea1, msl1, prp5/cwf1, prp10, prp12/sap130, prp17, prp22, sap61, sap62, sap114, sap145, slu7, smb1, smd1, smd3, smf1, smg1 and syf2.

It is found in the nucleus. In terms of biological role, involved in pre-mRNA splicing. May be involved in endoplasmic reticulum-associated protein degradation (ERAD) and required for growth at low and high temperatures. This chain is Pre-mRNA-splicing factor sap114 (sap114), found in Schizosaccharomyces pombe (strain 972 / ATCC 24843) (Fission yeast).